Here is a 451-residue protein sequence, read N- to C-terminus: Multidrug export protein MepA (451 aa).

Transmembrane regions (helical) follow at residues 26–46 (MIGT…IGFL), 54–74 (AISL…LFGV), 97–117 (SFSI…TLPF), 139–159 (LKVM…EQFA), 170–190 (IGML…IFGF), 194–214 (VVGA…FFIV), 245–265 (IPAF…NLFL), 282–302 (LVQF…PLIA), 318–338 (AVIM…FTIG), 355–375 (ATFI…GFLF), 397–417 (AIII…GVIW), and 418–438 (SLLI…YLLR).

This sequence belongs to the multi antimicrobial extrusion (MATE) (TC 2.A.66.1) family. MepA subfamily.

The protein resides in the cell membrane. Its function is as follows. Multidrug resistance efflux protein. This Staphylococcus aureus (strain MSSA476) protein is Multidrug export protein MepA (mepA).